The primary structure comprises 190 residues: Peptidyl-tRNA hydrolase (190 aa).

Residue Y14 participates in tRNA binding. The active-site Proton acceptor is the H19. TRNA is bound by residues Y64, N66, and N112.

It belongs to the PTH family. Monomer.

It is found in the cytoplasm. It carries out the reaction an N-acyl-L-alpha-aminoacyl-tRNA + H2O = an N-acyl-L-amino acid + a tRNA + H(+). Functionally, hydrolyzes ribosome-free peptidyl-tRNAs (with 1 or more amino acids incorporated), which drop off the ribosome during protein synthesis, or as a result of ribosome stalling. Its function is as follows. Catalyzes the release of premature peptidyl moieties from peptidyl-tRNA molecules trapped in stalled 50S ribosomal subunits, and thus maintains levels of free tRNAs and 50S ribosomes. The chain is Peptidyl-tRNA hydrolase from Chlorobium luteolum (strain DSM 273 / BCRC 81028 / 2530) (Pelodictyon luteolum).